We begin with the raw amino-acid sequence, 184 residues long: Threonylcarbamoyl-AMP synthase (184 aa).

In terms of domain architecture, YrdC-like spans 1–184 (MNNLLAVIEL…IFTQHIFRQG (184 aa)).

Belongs to the SUA5 family. TsaC subfamily.

It localises to the cytoplasm. The catalysed reaction is L-threonine + hydrogencarbonate + ATP = L-threonylcarbamoyladenylate + diphosphate + H2O. Its function is as follows. Required for the formation of a threonylcarbamoyl group on adenosine at position 37 (t(6)A37) in tRNAs that read codons beginning with adenine. Catalyzes the conversion of L-threonine, HCO(3)(-)/CO(2) and ATP to give threonylcarbamoyl-AMP (TC-AMP) as the acyladenylate intermediate, with the release of diphosphate. This chain is Threonylcarbamoyl-AMP synthase, found in Haemophilus ducreyi (strain 35000HP / ATCC 700724).